A 177-amino-acid polypeptide reads, in one-letter code: Anti-apoptotic protein NR13 (177 aa).

Positions 75–94 (LETDGGLNWGRLLALVVFAG) match the BH1 motif. Residues 86-106 (LLALVVFAGTLAAALAESACE) traverse the membrane as a helical segment. The short motif at 126-141 (EWMEEHGGWDGFCRFF) is the BH2 element. A helical transmembrane segment spans residues 156–176 (SNAIMAAAGFGIAGLAFLLVV).

The protein belongs to the Bcl-2 family. As to quaternary structure, interacts with BAX. As to expression, mainly expressed in neural and muscular tissues.

The protein localises to the cell membrane. Shows anti-apoptotic properties. Counteract the pro-apoptotic activity of BAX. This Coturnix japonica (Japanese quail) protein is Anti-apoptotic protein NR13 (NR13).